The primary structure comprises 808 residues: Probable E3 ubiquitin-protein ligase MARCHF10 (808 aa).

Disordered regions lie at residues 33 to 81 (LRRQ…LTEP), 101 to 268 (QTSV…RKAS), and 284 to 415 (SRRE…EVGV). A compositionally biased stretch (basic and acidic residues) spans 34 to 49 (RRQEYRRDPNEKKRDQ). The span at 237–249 (QAFQGKNSPQVLS) shows a compositional bias: polar residues. 2 stretches are compositionally biased toward basic and acidic residues: residues 330–349 (KNFEENAENCRGHSSRRSEP) and 379–397 (LPDRESATEKDRGGSENAK). The segment at 651–721 (DSEEEGDLCR…EMCKQGLLVD (71 aa)) adopts an RING-CH-type zinc-finger fold. Cysteine 659, cysteine 662, cysteine 677, cysteine 679, histidine 687, cysteine 690, cysteine 711, and cysteine 714 together coordinate Zn(2+). The segment at 773–808 (ERERLSRNYPQPRTEENENSELGDGNEGSISQSQVV) is disordered.

It catalyses the reaction S-ubiquitinyl-[E2 ubiquitin-conjugating enzyme]-L-cysteine + [acceptor protein]-L-lysine = [E2 ubiquitin-conjugating enzyme]-L-cysteine + N(6)-ubiquitinyl-[acceptor protein]-L-lysine.. It functions in the pathway protein modification; protein ubiquitination. E3 ubiquitin-protein ligase. E3 ubiquitin ligases accept ubiquitin from an E2 ubiquitin-conjugating enzyme in the form of a thioester and then directly transfer the ubiquitin to targeted substrates. This is Probable E3 ubiquitin-protein ligase MARCHF10 from Homo sapiens (Human).